We begin with the raw amino-acid sequence, 308 residues long: Oxygen-dependent coproporphyrinogen-III oxidase (308 aa).

A substrate-binding site is contributed by S100. Positions 104 and 114 each coordinate a divalent metal cation. H114 functions as the Proton donor in the catalytic mechanism. 116-118 (NFR) provides a ligand contact to substrate. H153 and H183 together coordinate a divalent metal cation. Residues 248 to 283 (YVEFNLVFDRGTIFGLQSGGRTESILSSMPPMATWK) form an important for dimerization region. Substrate is bound at residue 266–268 (GGR).

The protein belongs to the aerobic coproporphyrinogen-III oxidase family. As to quaternary structure, homodimer. A divalent metal cation is required as a cofactor.

Its subcellular location is the cytoplasm. It carries out the reaction coproporphyrinogen III + O2 + 2 H(+) = protoporphyrinogen IX + 2 CO2 + 2 H2O. It functions in the pathway porphyrin-containing compound metabolism; protoporphyrin-IX biosynthesis; protoporphyrinogen-IX from coproporphyrinogen-III (O2 route): step 1/1. Its function is as follows. Involved in the heme biosynthesis. Catalyzes the aerobic oxidative decarboxylation of propionate groups of rings A and B of coproporphyrinogen-III to yield the vinyl groups in protoporphyrinogen-IX. This is Oxygen-dependent coproporphyrinogen-III oxidase from Francisella philomiragia subsp. philomiragia (strain ATCC 25017 / CCUG 19701 / FSC 153 / O#319-036).